The chain runs to 225 residues: ATP-dependent Clp protease proteolytic subunit (225 aa).

The active-site Nucleophile is the serine 123. Histidine 148 is a catalytic residue.

This sequence belongs to the peptidase S14 family. As to quaternary structure, fourteen ClpP subunits assemble into 2 heptameric rings which stack back to back to give a disk-like structure with a central cavity, resembling the structure of eukaryotic proteasomes.

It localises to the cytoplasm. It carries out the reaction Hydrolysis of proteins to small peptides in the presence of ATP and magnesium. alpha-casein is the usual test substrate. In the absence of ATP, only oligopeptides shorter than five residues are hydrolyzed (such as succinyl-Leu-Tyr-|-NHMec, and Leu-Tyr-Leu-|-Tyr-Trp, in which cleavage of the -Tyr-|-Leu- and -Tyr-|-Trp bonds also occurs).. Cleaves peptides in various proteins in a process that requires ATP hydrolysis. Has a chymotrypsin-like activity. Plays a major role in the degradation of misfolded proteins. The sequence is that of ATP-dependent Clp protease proteolytic subunit from Chlorobaculum tepidum (strain ATCC 49652 / DSM 12025 / NBRC 103806 / TLS) (Chlorobium tepidum).